A 472-amino-acid chain; its full sequence is Regulator of G-protein signaling 6 (472 aa).

The region spanning 40–115 (KTGGVPIRTV…DDGTFYRFQA (76 aa)) is the DEP domain. The G protein gamma domain occupies 261–330 (IRKQITFLNA…MSKEPSQQRV (70 aa)). The region spanning 336 to 441 (SFDEILKDQV…LMKSDSYARF (106 aa)) is the RGS domain.

Interacts with GNB5. Interacts with RGS7BP, leading to regulate the subcellular location of the heterodimer formed with GNB5. Interacts with GNAI1.

Its subcellular location is the cytoplasm. The protein localises to the cytosol. It is found in the membrane. The protein resides in the nucleus. It localises to the cell membrane. In terms of biological role, regulates G protein-coupled receptor signaling cascades. Inhibits signal transduction by increasing the GTPase activity of G protein alpha subunits, thereby driving them into their inactive GDP-bound form. The RGS6/GNB5 dimer enhances GNAO1 GTPase activity. The protein is Regulator of G-protein signaling 6 (RGS6) of Homo sapiens (Human).